The sequence spans 253 residues: 5-oxoprolinase subunit A (253 aa).

This sequence belongs to the LamB/PxpA family. As to quaternary structure, forms a complex composed of PxpA, PxpB and PxpC.

The enzyme catalyses 5-oxo-L-proline + ATP + 2 H2O = L-glutamate + ADP + phosphate + H(+). Catalyzes the cleavage of 5-oxoproline to form L-glutamate coupled to the hydrolysis of ATP to ADP and inorganic phosphate. This Bacillus cereus (strain Q1) protein is 5-oxoprolinase subunit A.